Here is a 404-residue protein sequence, read N- to C-terminus: Cysteine desulfurase IscS (404 aa).

Residues 75 to 76 (AT), N155, Q183, and 203 to 205 (SGH) contribute to the pyridoxal 5'-phosphate site. At K206 the chain carries N6-(pyridoxal phosphate)lysine. Residue T243 coordinates pyridoxal 5'-phosphate. C328 functions as the Cysteine persulfide intermediate in the catalytic mechanism. C328 contributes to the [2Fe-2S] cluster binding site.

The protein belongs to the class-V pyridoxal-phosphate-dependent aminotransferase family. NifS/IscS subfamily. Homodimer. Forms a heterotetramer with IscU, interacts with other sulfur acceptors. Requires pyridoxal 5'-phosphate as cofactor.

Its subcellular location is the cytoplasm. The catalysed reaction is (sulfur carrier)-H + L-cysteine = (sulfur carrier)-SH + L-alanine. It participates in cofactor biosynthesis; iron-sulfur cluster biosynthesis. Functionally, master enzyme that delivers sulfur to a number of partners involved in Fe-S cluster assembly, tRNA modification or cofactor biosynthesis. Catalyzes the removal of elemental sulfur atoms from cysteine to produce alanine. Functions as a sulfur delivery protein for Fe-S cluster synthesis onto IscU, an Fe-S scaffold assembly protein, as well as other S acceptor proteins. This Shewanella baltica (strain OS223) protein is Cysteine desulfurase IscS.